A 519-amino-acid chain; its full sequence is MDKRKQSDYDNGKSKPTNGSKTTKFNLIKIIIRNLLIGILLMLVLNTIRFTSKQPKVEILSPDHIDSFTTLSDIELAQRLAKATTFKTISFGESDEFDQYEPEFLKFHEFLKITFPKVHKYLKLNIIANYSLVYNWKGLDESLKPILLAGHIDVVPTLFLDKWTHPPFSGHIDDTYIWGRGTMDDKGSVMAILESVEDLLSQGFKPQRSIYFAFGHDEELGGNNGAFNINKYFDTNEIGPFEFILDEGLPILLPPVFPGLSKPIASVGITEKGAIDIKLSVTIVGGHSSMPRRESAIGVLAQAVSKLENNPPSPKLRETRLLFDFVGRECSLPYRFLFSNLWLFEPIISRVLSTKPTLDALQRTTTALTIFNAGNKANVIPMEANATINFRVVPGDSTNDIIDHVNRVINDDRVKISKISNIIEPAPVSSTTSKSFNLLQSTILQEFPDVVVAPTIMIANTDTRHYWNLTENIFRFCPMVLENSDLQRLHGIDERLTIKNYKQLVDFYYHLIKNTEKYL.

The helical transmembrane segment at 25–45 (FNLIKIIIRNLLIGILLMLVL) threads the bilayer. His-151 contributes to the Zn(2+) binding site. The active site involves Asp-153. Residue Asp-184 coordinates Zn(2+). The Proton acceptor role is filled by Glu-218. Zn(2+) is bound by residues Glu-219, Asp-246, and His-490.

It belongs to the peptidase M20A family. It depends on Zn(2+) as a cofactor.

The protein localises to the membrane. The protein is Probable carboxypeptidase S-like 2 of Dictyostelium discoideum (Social amoeba).